A 249-amino-acid polypeptide reads, in one-letter code: Electron transfer flavoprotein subunit beta (249 aa).

The protein belongs to the ETF beta-subunit/FixA family. Heterodimer of an alpha and a beta subunit. It depends on FAD as a cofactor. The cofactor is AMP.

Its function is as follows. The electron transfer flavoprotein serves as a specific electron acceptor for other dehydrogenases. It transfers the electrons to the main respiratory chain via ETF-ubiquinone oxidoreductase (ETF dehydrogenase). This Pseudomonas aeruginosa (strain ATCC 15692 / DSM 22644 / CIP 104116 / JCM 14847 / LMG 12228 / 1C / PRS 101 / PAO1) protein is Electron transfer flavoprotein subunit beta (etfB).